Reading from the N-terminus, the 202-residue chain is Guanylate kinase (202 aa).

The region spanning 3-181 (GNLFIITAPS…ALEDLRAIIR (179 aa)) is the Guanylate kinase-like domain. An ATP-binding site is contributed by 10-17 (APSGAGKT).

This sequence belongs to the guanylate kinase family.

The protein localises to the cytoplasm. It catalyses the reaction GMP + ATP = GDP + ADP. In terms of biological role, essential for recycling GMP and indirectly, cGMP. In Methylobacillus flagellatus (strain ATCC 51484 / DSM 6875 / VKM B-1610 / KT), this protein is Guanylate kinase.